The following is a 267-amino-acid chain: MESRKTFDSIPDDLFVEIALRLSSKSIARCRCVSKLWASILYRQDFTELFITKSSARPRLLFAVLKASGLIFYSSPQSQNPSLEVDFHNHMKFHEDMNLYMCSYVSGFDPIGKQHKVLCMNKRLNKEWVHYILTLGTENLKWRKMICPLTHEPYYGRALSINGVLYYFARTSCFLVVSFNVRSEKFKFLDGKDFSNFHREFINYKGKLGVTKLECDAGDGHPRELCVWVLEDVEKQEWSQYIYSLPKIKVNRIRNDNIFAMFLPLTI.

An F-box domain is found at 4–53 (RKTFDSIPDDLFVEIALRLSSKSIARCRCVSKLWASILYRQDFTELFITK).

The sequence is that of Putative F-box protein At5g38810 from Arabidopsis thaliana (Mouse-ear cress).